The following is a 505-amino-acid chain: Maturase K (505 aa).

This sequence belongs to the intron maturase 2 family. MatK subfamily.

It localises to the plastid. It is found in the chloroplast. Its function is as follows. Usually encoded in the trnK tRNA gene intron. Probably assists in splicing its own and other chloroplast group II introns. The protein is Maturase K of Phaulothamnus spinescens (Snake-eyes).